The following is a 238-amino-acid chain: Large ribosomal subunit protein uL5c (238 aa).

Belongs to the universal ribosomal protein uL5 family. Part of the 50S ribosomal subunit; contacts the 5S rRNA.

The protein resides in the plastid. It is found in the chloroplast. Functionally, binds 5S rRNA, forms part of the central protuberance of the 50S subunit. This is Large ribosomal subunit protein uL5c (rpl5) from Thalassiosira pseudonana (Marine diatom).